Reading from the N-terminus, the 145-residue chain is Fluoride-specific ion channel FluC 2 (145 aa).

Helical transmembrane passes span 16–36, 42–62, 80–100, and 113–133; these read MLLVFVGGALGTAARALLSAA, VISVITFVINVIGAFVLGWLL, LFAGTGVLGGFTTYSAFAVDT, and ILYAAATIAIGAAAYLAGIAL. G88 and T91 together coordinate Na(+).

It belongs to the fluoride channel Fluc/FEX (TC 1.A.43) family.

The protein localises to the cell membrane. The enzyme catalyses fluoride(in) = fluoride(out). With respect to regulation, na(+) is not transported, but it plays an essential structural role and its presence is essential for fluoride channel function. Functionally, fluoride-specific ion channel. Important for reducing fluoride concentration in the cell, thus reducing its toxicity. The protein is Fluoride-specific ion channel FluC 2 of Leifsonia xyli subsp. xyli (strain CTCB07).